Reading from the N-terminus, the 123-residue chain is Holo-[acyl-carrier-protein] synthase (123 aa).

Residues aspartate 9 and glutamate 57 each contribute to the Mg(2+) site.

Belongs to the P-Pant transferase superfamily. AcpS family. Mg(2+) serves as cofactor.

The protein resides in the cytoplasm. The enzyme catalyses apo-[ACP] + CoA = holo-[ACP] + adenosine 3',5'-bisphosphate + H(+). Transfers the 4'-phosphopantetheine moiety from coenzyme A to a Ser of acyl-carrier-protein. This Streptomyces coelicolor (strain ATCC BAA-471 / A3(2) / M145) protein is Holo-[acyl-carrier-protein] synthase.